The chain runs to 390 residues: Glutamate 5-kinase (390 aa).

Residue K29 participates in ATP binding. Positions 69, 156, and 168 each coordinate substrate. T188 to D189 contacts ATP. Residues S295–N374 form the PUA domain.

This sequence belongs to the glutamate 5-kinase family.

It localises to the cytoplasm. It carries out the reaction L-glutamate + ATP = L-glutamyl 5-phosphate + ADP. Its pathway is amino-acid biosynthesis; L-proline biosynthesis; L-glutamate 5-semialdehyde from L-glutamate: step 1/2. In terms of biological role, catalyzes the transfer of a phosphate group to glutamate to form L-glutamate 5-phosphate. The protein is Glutamate 5-kinase of Psychrobacter cryohalolentis (strain ATCC BAA-1226 / DSM 17306 / VKM B-2378 / K5).